The following is a 225-amino-acid chain: MSNLKHCSNCKHNGLITESNHEFCIFCQSIFQLSNKVSKKSNFHVSNKLIHLRNVLRRLLSNQCSSDVIVELKSVMTKNNISSTDIDANFVSSFLKANEKINKKDYKLVFEIINHIKEEKLNLDTSKINEVIEIFKHLVFFCQENTPSKTINYSFFLDKIFSLTSVTNNLKPQTVKNYTKNNSNQLVWENFLDYMKKKKINTSVYDYGHEYVFVDYGFTTCSLEV.

A zinc finger lies at 7–27 (CSNCKHNGLITESNHEFCIFC).

Belongs to the nucleo-cytoplasmic large DNA viruses (NCLDVs) VLTF-3 family. In terms of assembly, interacts with the late transcription elongation factor H5/VLTF-4. Interacts with the late transcription factors VLTF-1.

In terms of biological role, acts with RNA polymerase to initiate transcription from late gene promoters. This Fowlpox virus (strain NVSL) (FPV) protein is Viral late gene transcription factor 3 (VLTF3).